We begin with the raw amino-acid sequence, 552 residues long: Dihydroxy-acid dehydratase (552 aa).

Residue aspartate 78 coordinates Mg(2+). Cysteine 119 serves as a coordination point for [2Fe-2S] cluster. Mg(2+) contacts are provided by aspartate 120 and lysine 121. Position 121 is an N6-carboxylysine (lysine 121). A [2Fe-2S] cluster-binding site is contributed by cysteine 191. Glutamate 442 is a binding site for Mg(2+). The active-site Proton acceptor is the serine 468.

It belongs to the IlvD/Edd family. In terms of assembly, homodimer. [2Fe-2S] cluster serves as cofactor. Mg(2+) is required as a cofactor.

It carries out the reaction (2R)-2,3-dihydroxy-3-methylbutanoate = 3-methyl-2-oxobutanoate + H2O. The enzyme catalyses (2R,3R)-2,3-dihydroxy-3-methylpentanoate = (S)-3-methyl-2-oxopentanoate + H2O. It participates in amino-acid biosynthesis; L-isoleucine biosynthesis; L-isoleucine from 2-oxobutanoate: step 3/4. The protein operates within amino-acid biosynthesis; L-valine biosynthesis; L-valine from pyruvate: step 3/4. Its function is as follows. Functions in the biosynthesis of branched-chain amino acids. Catalyzes the dehydration of (2R,3R)-2,3-dihydroxy-3-methylpentanoate (2,3-dihydroxy-3-methylvalerate) into 2-oxo-3-methylpentanoate (2-oxo-3-methylvalerate) and of (2R)-2,3-dihydroxy-3-methylbutanoate (2,3-dihydroxyisovalerate) into 2-oxo-3-methylbutanoate (2-oxoisovalerate), the penultimate precursor to L-isoleucine and L-valine, respectively. This is Dihydroxy-acid dehydratase from Caldicellulosiruptor saccharolyticus (strain ATCC 43494 / DSM 8903 / Tp8T 6331).